A 318-amino-acid chain; its full sequence is ADP-L-glycero-D-manno-heptose-6-epimerase (318 aa).

NADP(+) is bound by residues 10–11 (FI), 31–32 (DN), K38, K53, 76–80 (QGACS), and N93. The active-site Proton acceptor is Y141. An NADP(+)-binding site is contributed by K145. N172 is a substrate binding site. The NADP(+) site is built by V173 and K181. Catalysis depends on K181, which acts as the Proton acceptor. Substrate contacts are provided by residues R183, H190, 204–207 (FEGS), R212, and Y276.

It belongs to the NAD(P)-dependent epimerase/dehydratase family. HldD subfamily. In terms of assembly, homopentamer. NADP(+) is required as a cofactor.

It carries out the reaction ADP-D-glycero-beta-D-manno-heptose = ADP-L-glycero-beta-D-manno-heptose. It functions in the pathway nucleotide-sugar biosynthesis; ADP-L-glycero-beta-D-manno-heptose biosynthesis; ADP-L-glycero-beta-D-manno-heptose from D-glycero-beta-D-manno-heptose 7-phosphate: step 4/4. Catalyzes the interconversion between ADP-D-glycero-beta-D-manno-heptose and ADP-L-glycero-beta-D-manno-heptose via an epimerization at carbon 6 of the heptose. This Brachyspira hyodysenteriae (strain ATCC 49526 / WA1) protein is ADP-L-glycero-D-manno-heptose-6-epimerase.